A 137-amino-acid chain; its full sequence is NADH-quinone oxidoreductase subunit A 1 (137 aa).

3 consecutive transmembrane segments (helical) span residues 14–34 (FAAF…VSAL), 66–86 (FYLV…LFAW), and 95–115 (WAGL…LVYL).

Belongs to the complex I subunit 3 family. As to quaternary structure, NDH-1 is composed of 13 different subunits. Subunits NuoA, H, J, K, L, M, N constitute the membrane sector of the complex.

Its subcellular location is the cell inner membrane. The enzyme catalyses a quinone + NADH + 5 H(+)(in) = a quinol + NAD(+) + 4 H(+)(out). Functionally, NDH-1 shuttles electrons from NADH, via FMN and iron-sulfur (Fe-S) centers, to quinones in the respiratory chain. The immediate electron acceptor for the enzyme in this species is believed to be ubiquinone. Couples the redox reaction to proton translocation (for every two electrons transferred, four hydrogen ions are translocated across the cytoplasmic membrane), and thus conserves the redox energy in a proton gradient. In Pseudomonas paraeruginosa (strain DSM 24068 / PA7) (Pseudomonas aeruginosa (strain PA7)), this protein is NADH-quinone oxidoreductase subunit A 1.